A 166-amino-acid chain; its full sequence is uncharacterized protein (166 aa).

Positions 28–55 (SRQVHPPWPVPCKSKLQEQDSSESKESK) are disordered. Over residues 42 to 55 (KLQEQDSSESKESK) the composition is skewed to basic and acidic residues. The HTH araC/xylS-type domain occupies 67–163 (QNAMLYIENN…NYTPKQFKRT (97 aa)). 2 consecutive DNA-binding regions (H-T-H motif) follow at residues 84-105 (DTVAFSVGVSRSYLVKQFKLAT) and 130-153 (VTETAYEVGFNNSNYFATVFKKRT).

This is an uncharacterized protein from Pseudoalteromonas carrageenovora (Alteromonas carrageenovora).